Reading from the N-terminus, the 380-residue chain is Cytochrome b (380 aa).

4 consecutive transmembrane segments (helical) span residues 34–54 (FGSLLAVCLVTQILTGLLLAM), 78–99 (WLIRNLHANGASFFFICIFLHI), 114–134 (WNTGVILLLTLMATAFVGYVL), and 179–199 (FFALHFLLPFVIAGITIIHLT). Heme b contacts are provided by His84 and His98. Residues His183 and His197 each contribute to the heme b site. Residue His202 participates in a ubiquinone binding. 4 helical membrane-spanning segments follow: residues 227 to 247 (IKDILGLTLMFIPFLTLALFS), 289 to 309 (LGGVLALAASVLILLLIPFLH), 321 to 341 (LSQTLFWLLVANLLILTWIGS), and 348 to 368 (FIIIGQMASLSYFSILLILFP).

It belongs to the cytochrome b family. The cytochrome bc1 complex contains 11 subunits: 3 respiratory subunits (MT-CYB, CYC1 and UQCRFS1), 2 core proteins (UQCRC1 and UQCRC2) and 6 low-molecular weight proteins (UQCRH/QCR6, UQCRB/QCR7, UQCRQ/QCR8, UQCR10/QCR9, UQCR11/QCR10 and a cleavage product of UQCRFS1). This cytochrome bc1 complex then forms a dimer. Heme b serves as cofactor.

Its subcellular location is the mitochondrion inner membrane. In terms of biological role, component of the ubiquinol-cytochrome c reductase complex (complex III or cytochrome b-c1 complex) that is part of the mitochondrial respiratory chain. The b-c1 complex mediates electron transfer from ubiquinol to cytochrome c. Contributes to the generation of a proton gradient across the mitochondrial membrane that is then used for ATP synthesis. The protein is Cytochrome b (MT-CYB) of Alectoris chukar (Chukar partridge).